Reading from the N-terminus, the 317-residue chain is Nucleosome assembly protein 1;4 (317 aa).

Positions 52–67 match the Nuclear export signal motif; it reads LSPKVTKRVLFLKDIQ. A Nuclear localization signal motif is present at residues 214–219; that stretch reads KKKTKK. The disordered stretch occupies residues 297-317; the sequence is ALVDEDDSDDNDDDDNDEKSD. Acidic residues predominate over residues 298–317; it reads LVDEDDSDDNDDDDNDEKSD.

Belongs to the nucleosome assembly protein (NAP) family. In terms of assembly, can form homomeric and heteromeric protein complexes with NAP1;1, NAP1;2 and NAP1;3. Binds histone H2A. In terms of tissue distribution, expressed in the root segment covering the apical end of the differentiation zone, the elongation zone of the root and the mature pollen within the anthers of open flowers.

It localises to the nucleus. It is found in the cytoplasm. Its function is as follows. May modulate chromatin structure by regulation of nucleosome assembly/disassembly. This Arabidopsis thaliana (Mouse-ear cress) protein is Nucleosome assembly protein 1;4 (NAP1;4).